A 1445-amino-acid chain; its full sequence is CD109 antigen (1445 aa).

Positions 1–21 (MQGPPLLTAAHLLCVCTAALA) are cleaved as a signal peptide. N-linked (GlcNAc...) asparagine glycosylation is found at N68, N118, N247, N279, N365, N419, N513, and N645. Residues 593–702 (DKSVNLMNAS…TWIWLDTNMG (110 aa)) are bait region (approximate). A cross-link (isoglutamyl cysteine thioester (Cys-Gln)) is located at residues 921–924 (CGEQ). N-linked (GlcNAc...) asparagine glycosylation is found at N1086 and N1355. A lipid anchor (GPI-anchor amidated alanine) is attached at A1420. The propeptide at 1421–1445 (SGSHHHSSVIFIFCFKLLYFMELWL) is removed in mature form.

It belongs to the protease inhibitor I39 (alpha-2-macroglobulin) family. Heterodimer; disulfide-linked. Interacts with TGFB1 and TGFBR1. Forms a heteromeric complex with TGFBR1, TGFBR2 and TGFBR3 in a ligand-independent manner. N-glycosylated. In terms of processing, 2 forms of 150 (p150) and 120 kDa (p120) exist due to proteolytic degradation from a 180 kDa form. Widely expressed with high level in uterus, aorta, heart, lung, trachea, placenta and in fetal heart, kidney, liver, spleen and lung. Expressed by CD34(+) acute myeloid leukemia cell lines, T-cell lines, activated T-lymphoblasts, endothelial cells and activated platelets. Isoform 4 is expressed in placenta. Isoform 1 is expressed in keratinocytes and placenta.

The protein resides in the cell membrane. Modulates negatively TGFB1 signaling in keratinocytes. The protein is CD109 antigen (CD109) of Homo sapiens (Human).